A 644-amino-acid chain; its full sequence is Translation factor GUF1, mitochondrial (644 aa).

The transit peptide at Met-1–Cys-14 directs the protein to the mitochondrion. Residues Glu-46 to Thr-227 form the tr-type G domain. GTP-binding positions include Ala-55 to Ser-62, Asp-120 to His-124, and Asn-174 to Asp-177.

Belongs to the TRAFAC class translation factor GTPase superfamily. Classic translation factor GTPase family. LepA subfamily.

Its subcellular location is the mitochondrion inner membrane. The enzyme catalyses GTP + H2O = GDP + phosphate + H(+). In terms of biological role, promotes mitochondrial protein synthesis. May act as a fidelity factor of the translation reaction, by catalyzing a one-codon backward translocation of tRNAs on improperly translocated ribosomes. Binds to mitochondrial ribosomes in a GTP-dependent manner. The sequence is that of Translation factor GUF1, mitochondrial from Eremothecium gossypii (strain ATCC 10895 / CBS 109.51 / FGSC 9923 / NRRL Y-1056) (Yeast).